Here is a 118-residue protein sequence, read N- to C-terminus: Small ribosomal subunit protein uS13 (118 aa).

Residues Arg-93–Lys-118 form a disordered region.

This sequence belongs to the universal ribosomal protein uS13 family. Part of the 30S ribosomal subunit. Forms a loose heterodimer with protein S19. Forms two bridges to the 50S subunit in the 70S ribosome.

Its function is as follows. Located at the top of the head of the 30S subunit, it contacts several helices of the 16S rRNA. In the 70S ribosome it contacts the 23S rRNA (bridge B1a) and protein L5 of the 50S subunit (bridge B1b), connecting the 2 subunits; these bridges are implicated in subunit movement. Contacts the tRNAs in the A and P-sites. This Pseudomonas fluorescens (strain Pf0-1) protein is Small ribosomal subunit protein uS13.